The primary structure comprises 214 residues: Putative glucose-6-phosphate isomerase 1 (214 aa).

Positions 92, 94, 101, and 140 each coordinate Fe cation.

The protein belongs to the archaeal-type GPI family. Homodimer. Fe cation is required as a cofactor.

It localises to the cytoplasm. It carries out the reaction alpha-D-glucose 6-phosphate = beta-D-fructose 6-phosphate. Its pathway is carbohydrate degradation; glycolysis; D-glyceraldehyde 3-phosphate and glycerone phosphate from D-glucose: step 2/4. The polypeptide is Putative glucose-6-phosphate isomerase 1 (pgiA1) (Rhizobium meliloti (strain 1021) (Ensifer meliloti)).